Here is a 475-residue protein sequence, read N- to C-terminus: Ribulose bisphosphate carboxylase large chain (475 aa).

Residues 1 to 2 (MS) constitute a propeptide that is removed on maturation. Position 3 is an N-acetylproline (proline 3). Lysine 14 carries the post-translational modification N6,N6,N6-trimethyllysine. Positions 123 and 173 each coordinate substrate. Lysine 175 (proton acceptor) is an active-site residue. Lysine 177 contributes to the substrate binding site. 3 residues coordinate Mg(2+): lysine 201, aspartate 203, and glutamate 204. An N6-carboxylysine modification is found at lysine 201. The active-site Proton acceptor is histidine 294. The substrate site is built by arginine 295, histidine 327, and serine 379.

It belongs to the RuBisCO large chain family. Type I subfamily. As to quaternary structure, heterohexadecamer of 8 large chains and 8 small chains. Mg(2+) serves as cofactor.

It localises to the plastid. The protein resides in the chloroplast. It catalyses the reaction 2 (2R)-3-phosphoglycerate + 2 H(+) = D-ribulose 1,5-bisphosphate + CO2 + H2O. It carries out the reaction D-ribulose 1,5-bisphosphate + O2 = 2-phosphoglycolate + (2R)-3-phosphoglycerate + 2 H(+). Functionally, ruBisCO catalyzes two reactions: the carboxylation of D-ribulose 1,5-bisphosphate, the primary event in carbon dioxide fixation, as well as the oxidative fragmentation of the pentose substrate in the photorespiration process. Both reactions occur simultaneously and in competition at the same active site. The protein is Ribulose bisphosphate carboxylase large chain of Nymphaea alba (White water-lily).